The following is a 921-amino-acid chain: MKMRRGNSSNDHELGILRGANSDTNSDTESIASDRGAFSGPLGRPKRASKKNARFADDLPKRSNSVAGGRGDDDEYVEITLDIRDDSVAVHSVQQAAGGGGHLEDPELALLTKKTLESSLNNTTSLSFFRSTSSRIKNASRELRRVFSRRPSPAVRRFDRTSSAAIHALKGLKFIATKTAAWPAVDQRFDKLSADSNGLLLSAKFWECLGMNKESKDFADQLFRALARRNNVSGDAITKEQLRIFWEQISDESFDAKLQVFFDMVDKDEDGRVTEEEVAEIISLSASANKLSNIQKQAKEYAALIMEELDPDNAGFIMIENLEMLLLQAPNQSVRMGDSRILSQMLSQKLRPAKESNPLVRWSEKIKYFILDNWQRLWIMMLWLGICGGLFTYKFIQYKNKAAYGVMGYCVCVAKGGAETLKFNMALILLPVCRNTITWLRNKTKLGTVVPFDDSLNFHKVIASGIVVGVLLHAGAHLTCDFPRLIAADEDTYEPMEKYFGDQPTSYWWFVKGVEGWTGIVMVVLMAIAFTLATPWFRRNKLNLPNFLKKLTGFNAFWYTHHLFIIVYALLIVHGIKLYLTKIWYQKTTWMYLAVPILLYASERLLRAFRSSIKPVKMIKVAVYPGNVLSLHMTKPQGFKYKSGQFMLVNCRAVSPFEWHPFSITSAPGDDYLSVHIRTLGDWTRKLRTVFSEVCKPPTAGKSGLLRADGGDGNLPFPKVLIDGPYGAPAQDYKKYDVVLLVGLGIGATPMISILKDIINNMKGPDRDSDIENNNSNNNSKGFKTRKAYFYWVTREQGSFEWFKGIMDEISELDEEGIIELHNYCTSVYEEGDARVALIAMLQSLQHAKNGVDVVSGTRVKSHFAKPNWRQVYKKIAVQHPGKRIGVFYCGMPGMIKELKNLALDFSRKTTTKFDFHKENF.

Positions 1 to 71 (MKMRRGNSSN…RSNSVAGGRG (71 aa)) are disordered. Residues 1 to 376 (MKMRRGNSSN…KYFILDNWQR (376 aa)) are Cytoplasmic-facing. Ser-8, Ser-9, Ser-26, and Ser-39 each carry phosphoserine. The span at 21-31 (NSDTNSDTESI) shows a compositional bias: polar residues. Basic residues predominate over residues 44-53 (RPKRASKKNA). EF-hand-like regions lie at residues 193–203 (SADSNGLLLSA) and 230–241 (NNVSGDAITKEQ). EF-hand domains lie at 253–288 (SFDA…SASA) and 297–332 (QAKE…APNQ). Asp-266, Asp-268, Asp-270, Arg-272, and Glu-277 together coordinate Ca(2+). Ser-339, Ser-343, and Ser-347 each carry phosphoserine. Residues 377-397 (LWIMMLWLGICGGLFTYKFIQ) form a helical membrane-spanning segment. The Extracellular portion of the chain corresponds to 398–461 (YKNKAAYGVM…FDDSLNFHKV (64 aa)). In terms of domain architecture, Ferric oxidoreductase spans 415–572 (KGGAETLKFN…LFIIVYALLI (158 aa)). Residues 462 to 482 (IASGIVVGVLLHAGAHLTCDF) traverse the membrane as a helical segment. Over 483 to 516 (PRLIAADEDTYEPMEKYFGDQPTSYWWFVKGVEG) the chain is Cytoplasmic. The helical transmembrane segment at 517–537 (WTGIVMVVLMAIAFTLATPWF) threads the bilayer. Residues 538-559 (RRNKLNLPNFLKKLTGFNAFWY) lie on the Extracellular side of the membrane. Residues 560–580 (THHLFIIVYALLIVHGIKLYL) traverse the membrane as a helical segment. The Cytoplasmic segment spans residues 581–588 (TKIWYQKT). The chain crosses the membrane as a helical span at residues 589-606 (TWMYLAVPILLYASERLL). At 607–734 (RAFRSSIKPV…PYGAPAQDYK (128 aa)) the chain is on the extracellular side. One can recognise an FAD-binding FR-type domain in the interval 611-732 (SSIKPVKMIK…DGPYGAPAQD (122 aa)). Residues 735 to 755 (KYDVVLLVGLGIGATPMISIL) traverse the membrane as a helical segment. Residues 756 to 921 (KDIINNMKGP…TKFDFHKENF (166 aa)) are Cytoplasmic-facing.

Belongs to the RBOH (TC 5.B.1.3) family. In terms of assembly, monomer and homodimer. Interacts with BIK1 and FLS2. Interacts with PBL13. Binds to SIK1 upon flagellin perception and becomes activated by phosphorylation. Post-translationally, phosphorylated at Ser-39, Ser-343 and Ser-347 by BIK1 upon flagellin (flg22) treatment. Activated by phosphorylation at Ser-347 mediated by SIK1 and at Ser-8, Ser-9 and Ser-339 upon flagellin (e.g. flg22) perception. As to expression, more abundant in roots than in leaves, stems or inflorescences. Expressed in mesophyll and guard cells.

The protein localises to the membrane. Inhibited by diphenylene iodinium (DPI). Its function is as follows. Calcium-dependent NADPH oxidase that generates superoxide. Involved in the generation of reactive oxygen species (ROS) during incompatible interactions with pathogens, in response to pathogen-associated molecular pattern (PAMP)-triggered immunity (PTI) signaling and in UV-B and abscisic acid ROS-dependent signaling and via SIK1 mediated activation by phosphorylation. Might be required for ROS signal amplification during light stress. The chain is Respiratory burst oxidase homolog protein D from Arabidopsis thaliana (Mouse-ear cress).